We begin with the raw amino-acid sequence, 178 residues long: Conodipine-P2 (178 aa).

The first 24 residues, 1–24 (MKLLAPVLWAMAALGVTWLVAVDS), serve as a signal peptide directing secretion. Residues proline 38, proline 42, and proline 49 each carry the 4-hydroxyproline modification. Histidine 54 is an active-site residue. Positions 98 to 130 (KREVTSHRATSIAHSRLWKTALDQKSFLNRKAR) are cleaved as a propeptide — interchain peptide. At glutamine 131 the chain carries Pyrrolidone carboxylic acid. Proline 137 carries the 4-hydroxyproline modification.

Belongs to the phospholipase A2 family. Group IX subfamily. Heterodimer of an alpha and a beta chain; probably disulfide-linked. Ca(2+) serves as cofactor. Expressed by the venom duct.

The protein resides in the secreted. The catalysed reaction is a 1,2-diacyl-sn-glycero-3-phosphocholine + H2O = a 1-acyl-sn-glycero-3-phosphocholine + a fatty acid + H(+). In terms of biological role, catalyzes the calcium-dependent hydrolysis of the 2-acyl groups in 3-sn-phosphoglycerides. In Conus purpurascens (Purple cone), this protein is Conodipine-P2.